Reading from the N-terminus, the 920-residue chain is Alpha-L-rhamnosidase (920 aa).

Residues 1–19 (MCVVRTFWFAVLTVIFAVS) form the signal peptide. A lipid anchor (N-palmitoyl cysteine) is attached at cysteine 20. Residue cysteine 20 is the site of S-diacylglycerol cysteine attachment. Alpha-L-rhamnose contacts are provided by residues aspartate 500, 504–506 (RDE), aspartate 513, and tryptophan 565. The Proton donor role is filled by glutamate 506. Glutamate 779 acts as the Proton acceptor in catalysis. Histidine 800 lines the alpha-L-rhamnose pocket.

It belongs to the glycosyl hydrolase 78 family.

Its subcellular location is the cell membrane. It carries out the reaction Hydrolysis of terminal non-reducing alpha-L-rhamnose residues in alpha-L-rhamnosides.. Functionally, alpha-L-rhamnosidase involved in ulvan degradation. Ulvan is the main polysaccharide component of the Ulvales (green seaweed) cell wall. It is composed of disaccharide building blocks comprising 3-sulfated rhamnose (Rha3S) linked to D-glucuronic acid (GlcA), L-iduronic acid (IduA), or D-xylose (Xyl). The enzyme is able to degrade p-nitrophenyl-alpha-L-rhamnopyranoside (PNP-Rha) in vitro. Incubating the enzyme with the products obtained after degradation with ulvan lyase and beta-glucuronyl hydrolase (i.e. the trisaccharides beta-alpha-L-Rha3S-IduA-Rha3S and beta-alpha-L-Rha3S-GlcA-Rha3S) showed no degradation, suggesting that the enzyme is active on neutral rhamnose and that desulfation of the oligosaccharide must be achieved before cleavage of rhamnose. The protein is Alpha-L-rhamnosidase of Alteromonas sp. (strain LOR).